The following is a 259-amino-acid chain: uncharacterized protein (259 aa).

Residues 19 to 249 (TKIPGAKYVI…DEVINTIKKK (231 aa)) form the Radical SAM core domain. [4Fe-4S] cluster is bound by residues Cys34, Cys38, and Cys41.

The cofactor is [4Fe-4S] cluster.

This is an uncharacterized protein from Methanocaldococcus jannaschii (strain ATCC 43067 / DSM 2661 / JAL-1 / JCM 10045 / NBRC 100440) (Methanococcus jannaschii).